The sequence spans 253 residues: GTP cyclohydrolase III (253 aa).

Belongs to the archaeal-type GTP cyclohydrolase family.

It carries out the reaction GTP + 3 H2O = 2-amino-5-formylamino-6-(5-phospho-D-ribosylamino)pyrimidin-4(3H)-one + 2 phosphate + 2 H(+). Catalyzes the formation of 2-amino-5-formylamino-6-ribofuranosylamino-4(3H)-pyrimidinone ribonucleotide monophosphate and inorganic phosphate from GTP. Also has an independent pyrophosphate phosphohydrolase activity. This is GTP cyclohydrolase III from Natronomonas pharaonis (strain ATCC 35678 / DSM 2160 / CIP 103997 / JCM 8858 / NBRC 14720 / NCIMB 2260 / Gabara) (Halobacterium pharaonis).